A 196-amino-acid polypeptide reads, in one-letter code: NADH dehydrogenase [ubiquinone] 1 alpha subcomplex assembly factor 3 (196 aa).

The transit peptide at 1 to 93 (MIARTLRTVG…RSVLSWNVNS (93 aa)) directs the protein to the mitochondrion.

Belongs to the NDUFAF3 family. As to quaternary structure, together with NdufAF4 associates with mitochondrial complex I assembly intermediates during its biogenesis.

It is found in the mitochondrion. Functionally, involved in the assembly of mitochondrial NADH:ubiquinone oxidoreductase complex (complex I). Together with NdufAF4, involved in biogenesis of complex 1 modules N, Q and P-peripheral, but not the P-distal module. Required for recruitment of the complex I assembly factor Timmdc1 to complex 1 assembly intermediates. This is NADH dehydrogenase [ubiquinone] 1 alpha subcomplex assembly factor 3 from Drosophila melanogaster (Fruit fly).